We begin with the raw amino-acid sequence, 461 residues long: Bifunctional protein GlmU (461 aa).

The tract at residues 1–232 (MNLQIIILAA…SFEVQGINNR (232 aa)) is pyrophosphorylase. UDP-N-acetyl-alpha-D-glucosamine contacts are provided by residues 8 to 11 (LAAG), Lys-22, Gln-73, and 78 to 79 (GT). Asp-102 provides a ligand contact to Mg(2+). Positions 142, 157, and 230 each coordinate UDP-N-acetyl-alpha-D-glucosamine. Asn-230 is a Mg(2+) binding site. The interval 233–253 (QQLQQLERIWQQRAANQLMEK) is linker. An N-acetyltransferase region spans residues 254–461 (GATLADANRF…WKRPVKRERD (208 aa)). Residues Arg-336 and Lys-354 each contribute to the UDP-N-acetyl-alpha-D-glucosamine site. The active-site Proton acceptor is the His-366. Residues Tyr-369 and Asn-380 each contribute to the UDP-N-acetyl-alpha-D-glucosamine site. Acetyl-CoA is bound by residues Ala-383, 389–390 (NY), Ser-408, and Ala-426.

It in the N-terminal section; belongs to the N-acetylglucosamine-1-phosphate uridyltransferase family. The protein in the C-terminal section; belongs to the transferase hexapeptide repeat family. In terms of assembly, homotrimer. Mg(2+) is required as a cofactor.

Its subcellular location is the cytoplasm. The catalysed reaction is alpha-D-glucosamine 1-phosphate + acetyl-CoA = N-acetyl-alpha-D-glucosamine 1-phosphate + CoA + H(+). It catalyses the reaction N-acetyl-alpha-D-glucosamine 1-phosphate + UTP + H(+) = UDP-N-acetyl-alpha-D-glucosamine + diphosphate. Its pathway is nucleotide-sugar biosynthesis; UDP-N-acetyl-alpha-D-glucosamine biosynthesis; N-acetyl-alpha-D-glucosamine 1-phosphate from alpha-D-glucosamine 6-phosphate (route II): step 2/2. It functions in the pathway nucleotide-sugar biosynthesis; UDP-N-acetyl-alpha-D-glucosamine biosynthesis; UDP-N-acetyl-alpha-D-glucosamine from N-acetyl-alpha-D-glucosamine 1-phosphate: step 1/1. It participates in bacterial outer membrane biogenesis; LPS lipid A biosynthesis. Its function is as follows. Catalyzes the last two sequential reactions in the de novo biosynthetic pathway for UDP-N-acetylglucosamine (UDP-GlcNAc). The C-terminal domain catalyzes the transfer of acetyl group from acetyl coenzyme A to glucosamine-1-phosphate (GlcN-1-P) to produce N-acetylglucosamine-1-phosphate (GlcNAc-1-P), which is converted into UDP-GlcNAc by the transfer of uridine 5-monophosphate (from uridine 5-triphosphate), a reaction catalyzed by the N-terminal domain. This is Bifunctional protein GlmU from Legionella pneumophila (strain Corby).